Here is a 78-residue protein sequence, read N- to C-terminus: Neurogranin (78 aa).

M1 carries the N-acetylmethionine modification. The IQ domain occupies 26 to 49 (ANAAAAKIQASFRGHMARKKIKSG). S36 carries the phosphoserine; by PHK and PKC modification. Residues 38 to 78 (RGHMARKKIKSGERGRKGPGPGGPGGAGGARGGAGGGPSGD) form a disordered region. The 29-residue stretch at 50 to 78 (ERGRKGPGPGGPGGAGGARGGAGGGPSGD) folds into the Collagen-like domain. Residues 55 to 78 (GPGPGGPGGAGGARGGAGGGPSGD) are compositionally biased toward gly residues. R68 bears the Citrulline; partial mark. R68 is modified (omega-N-methylarginine).

It belongs to the neurogranin family. Post-translationally, the N-terminus is blocked. In terms of processing, phosphorylated at Ser-36 by PHK and PKC. Phosphorylation prevents interaction with Calmodulin and interrupts several learning- and memory-associated functions. Is highly enriched in brain. Accumulates postsynaptically in dendritic spines of neostriatal neurons.

Its function is as follows. Acts as a 'third messenger' substrate of protein kinase C-mediated molecular cascades during synaptic development and remodeling. Binds to calmodulin in the absence of calcium. This is Neurogranin (NRGN) from Bos taurus (Bovine).